Here is a 654-residue protein sequence, read N- to C-terminus: MAAATWSWLLAPFLLLHWASAGAGGGAGGSGAGLSGPAVFTSSFLVRFRRGVDNSFAHDVADKYGFDNLGPLVGADGHEYHFKHRTLPHARSRRSLTHTRALKSHPAVHTAVQQPGFKRVKRGLRPAVPAIHGMKFDLKVGEGNRIDEEPTDPYFPMQWYLKNTGQNGGKVRLDLNVQAAWAQGITGKNVTTAIMDDGVDYMHPDLKFNYNAEASYDFSSNDPFPYPRYTDDWFNSHGTRCAGEVAAARDNGICGVGVAYDSKIAGIRMLDQPYMTDLIEANSMGHEPHKIHIYSASWGPTDDGKTVDGPRNATMRAIVQGVNEGRNGLGNIYVWASGDGGEEDDCNCDGYAASMWTISINSAINDGQNAHYDESCSSTLASTFSNGAKDPNTGVATTDLYGKCTTTHSGTSAAAPEAAGVFALALEANPQLTWRDIQHLTVLTSKRNSLFDAKNRFHWTMNGVGLEFNHLFGFGVLDAGAMVTLSKQWHSVPPRYHCEAGELTQPQAIVMGRSLFWEIKTDACKGTDTEVNYLEHVQAVISANASRRGDLELFLTSPMGTKSMILSRRANDDDHRDGFTKWPFMTTHSWGEYPQGTWKLEARFNSPQTRHGNLLEWSLVLHGTKEAPYRTLHPSSPHSKLAIVKKAHEDKKMK.

The first 21 residues, M1 to A21, serve as a signal peptide directing secretion. Residues G22 to K121 constitute a propeptide that is removed on maturation. One can recognise a Peptidase S8 domain in the interval Q158–V483. N189 carries an N-linked (GlcNAc...) asparagine glycan. Residues D196 and H237 each act as charge relay system in the active site. 2 cysteine pairs are disulfide-bonded: C254–C404 and C346–C376. N312 is a glycosylation site (N-linked (GlcNAc...) asparagine). Residue S412 is the Charge relay system of the active site. The region spanning S491–A627 is the P/Homo B domain. C498 and C524 form a disulfide bridge. N544 is a glycosylation site (N-linked (GlcNAc...) asparagine).

The protein belongs to the peptidase S8 family. Furin subfamily. As to expression, expressed in the central nervous system (CNS) and midgut endocrine cells of third instar larva (at protein level). In the CNS, expressed in the CA-LP1 and CA-LP2 neurons which innervate the corpus allatum, and in the CC-MS2 neurons which innervate the corpora cardiaca of the ring gland. Also expressed in the CC-MS1, SP3, Tv and Va neurons. Expressed in Akh-producing cells of the corpora cardiaca. In the embryo, restricted to the final stages of embryogenesis where expression is found in anterior sensory structures and in only 168 cells in the brain and ventral nerve cord. After larvae hatch, the sensory structures and most cells in the CNS turn off or substantially reduce expression. In third instar larva, expressed at higher levels in the anterior section than in the posterior section. Little expression is detected in the adult head. In the developing eye, expressed at higher levels in pale-type R7 photoreceptor cells than in yellow-type R7 cells although expression is not seen in all pale-type R7 cells. Also expressed in outer photoreceptor cells.

Its subcellular location is the secreted. It carries out the reaction Release of protein hormones and neuropeptides from their precursors, generally by hydrolysis of -Lys-Arg-|- bonds.. Functionally, serine endopeptidase which is involved in the processing of hormone and other protein precursors at sites comprised of pairs of basic amino acid residues. Required during embryonic and larval development, probably by proteolytically processing peptide hormones involved in hatching, larval growth and larval molting. Required for the processing and activation of Akh which maintains normal hemolymph sugar levels. Has been shown in one study to be required for processing of sli into slit N-product and slit C-product in the embryo which is necessary for lateral transverse muscle elongation but has been shown in another study not to be required for sli cleavage. Required for larval hatching. Also required for normal larval wandering behavior which occurs prior to pupariation. Required during pupal development for head eversion, leg and wing disk extension, and abdominal differentiation. Required during eye development for R8 photoreceptor cell specification by regulating processing of ligands required for the BMP and activin signaling pathways. This is Neuroendocrine convertase 2 from Drosophila melanogaster (Fruit fly).